Consider the following 443-residue polypeptide: 2-hydroxyethylphosphonate dioxygenase (443 aa).

Positions 8-63 constitute an HTH cro/C1-type 1 domain; sequence LAHWMNARKYTAAQTADLAGLPLDDLRRLLGDEANEPDPAAATALAEALSVEPSQL. Lysine 16 contacts substrate. Residues 19-38 constitute a DNA-binding region (H-T-H motif); that stretch reads AAQTADLAGLPLDDLRRLLG. 2 residues coordinate substrate: tyrosine 98 and asparagine 126. Histidine 129 contributes to the Fe cation binding site. Glutamate 176, histidine 182, and serine 196 together coordinate substrate. A Fe cation-binding site is contributed by histidine 182. Residues 234–290 enclose the HTH cro/C1-type 2 domain; the sequence is VLDLFLARRAHTRTSAAEAAGVPPADLEAALRSPASETGLTVLRTLGRALGFDYRVL. Residues 245–265 constitute a DNA-binding region (H-T-H motif); it reads TRTSAAEAAGVPPADLEAALR.

Belongs to the non-heme iron-dependent dioxygenase family. As to quaternary structure, homodimer. Fe(2+) serves as cofactor.

The catalysed reaction is 2-hydroxyethylphosphonate + O2 = hydroxymethylphosphonate + formate + H(+). The protein operates within secondary metabolite biosynthesis; bialaphos biosynthesis. Its function is as follows. Non-heme-dependent dioxygenase that catalyzes the conversion of 2-hydroxyethylphosphonate (HEP) to hydroxymethylphosphonate (HMP) in the biosynthesis of phosphinothricin tripeptide (PTT), also known as bialaphos (BA), a natural-product antibiotic and potent herbicide. PTT contains the unusual amino acid phosphinothricin attached to 2 alanine residues. Synthetic phosphinothricin (glufosinate) is a key component of commercial herbicides. This chain is 2-hydroxyethylphosphonate dioxygenase (hepD), found in Streptomyces viridochromogenes (strain DSM 40736 / JCM 4977 / BCRC 1201 / Tue 494).